Here is a 239-residue protein sequence, read N- to C-terminus: Ribosomal RNA small subunit methyltransferase G (239 aa).

S-adenosyl-L-methionine contacts are provided by residues G77, F82, 128–129 (AE), and R147.

This sequence belongs to the methyltransferase superfamily. RNA methyltransferase RsmG family.

Its subcellular location is the cytoplasm. Its function is as follows. Specifically methylates the N7 position of guanine in position 535 of 16S rRNA. The polypeptide is Ribosomal RNA small subunit methyltransferase G (Bacillus cereus (strain ZK / E33L)).